A 324-amino-acid chain; its full sequence is Protein GET4 (324 aa).

The protein belongs to the GET4 family. Interacts with GET3A.

Its subcellular location is the cytoplasm. It is found in the cytosol. Involved in the regulation of root hair growth. The chain is Protein GET4 from Arabidopsis thaliana (Mouse-ear cress).